The following is a 531-amino-acid chain: CTP synthase (531 aa).

Positions 1–264 (MPKFVVVTGG…GDFLVERLRL (264 aa)) are amidoligase domain. S13 is a CTP binding site. S13 serves as a coordination point for UTP. 14-19 (GLGKGV) is a binding site for ATP. Y54 contacts L-glutamine. D71 lines the ATP pocket. Mg(2+) contacts are provided by D71 and E139. Residues 146 to 148 (DYE), 185 to 190 (KTKPLQ), and K221 each bind CTP. Residues 185-190 (KTKPLQ) and K221 contribute to the UTP site. The Glutamine amidotransferase type-1 domain occupies 293–531 (CGKYVELPDA…LSAAVEQSRR (239 aa)). Residue G351 participates in L-glutamine binding. C378 functions as the Nucleophile; for glutamine hydrolysis in the catalytic mechanism. Residues 379–382 (FGMQ), E402, and R459 each bind L-glutamine. Residues H504 and E506 contribute to the active site.

This sequence belongs to the CTP synthase family. Homotetramer.

It carries out the reaction UTP + L-glutamine + ATP + H2O = CTP + L-glutamate + ADP + phosphate + 2 H(+). The enzyme catalyses L-glutamine + H2O = L-glutamate + NH4(+). It catalyses the reaction UTP + NH4(+) + ATP = CTP + ADP + phosphate + 2 H(+). It functions in the pathway pyrimidine metabolism; CTP biosynthesis via de novo pathway; CTP from UDP: step 2/2. Its activity is regulated as follows. Allosterically activated by GTP, when glutamine is the substrate; GTP has no effect on the reaction when ammonia is the substrate. The allosteric effector GTP functions by stabilizing the protein conformation that binds the tetrahedral intermediate(s) formed during glutamine hydrolysis. Inhibited by the product CTP, via allosteric rather than competitive inhibition. Its function is as follows. Catalyzes the ATP-dependent amination of UTP to CTP with either L-glutamine or ammonia as the source of nitrogen. Regulates intracellular CTP levels through interactions with the four ribonucleotide triphosphates. In Pyrobaculum calidifontis (strain DSM 21063 / JCM 11548 / VA1), this protein is CTP synthase.